We begin with the raw amino-acid sequence, 89 residues long: Small ribosomal subunit protein uS15 (89 aa).

The protein belongs to the universal ribosomal protein uS15 family. As to quaternary structure, part of the 30S ribosomal subunit. Forms a bridge to the 50S subunit in the 70S ribosome, contacting the 23S rRNA.

In terms of biological role, one of the primary rRNA binding proteins, it binds directly to 16S rRNA where it helps nucleate assembly of the platform of the 30S subunit by binding and bridging several RNA helices of the 16S rRNA. Functionally, forms an intersubunit bridge (bridge B4) with the 23S rRNA of the 50S subunit in the ribosome. The chain is Small ribosomal subunit protein uS15 from Renibacterium salmoninarum (strain ATCC 33209 / DSM 20767 / JCM 11484 / NBRC 15589 / NCIMB 2235).